Reading from the N-terminus, the 163-residue chain is S-ribosylhomocysteine lyase (163 aa).

His-54, His-58, and Cys-128 together coordinate Fe cation.

It belongs to the LuxS family. In terms of assembly, homodimer. Requires Fe cation as cofactor.

It carries out the reaction S-(5-deoxy-D-ribos-5-yl)-L-homocysteine = (S)-4,5-dihydroxypentane-2,3-dione + L-homocysteine. Its function is as follows. Involved in the synthesis of autoinducer 2 (AI-2) which is secreted by bacteria and is used to communicate both the cell density and the metabolic potential of the environment. The regulation of gene expression in response to changes in cell density is called quorum sensing. Catalyzes the transformation of S-ribosylhomocysteine (RHC) to homocysteine (HC) and 4,5-dihydroxy-2,3-pentadione (DPD). This Wolinella succinogenes (strain ATCC 29543 / DSM 1740 / CCUG 13145 / JCM 31913 / LMG 7466 / NCTC 11488 / FDC 602W) (Vibrio succinogenes) protein is S-ribosylhomocysteine lyase.